Reading from the N-terminus, the 337-residue chain is MASSNFIDYVKVCCRSGKGGAGAVHFRKEKHTPLGGPDGGNGGRGGHIILRGNVQLWTLLHLKYTKHIMAEDGERGGTNRASGAQGKDQIVEVPLGTIARDPETGEKIAEITEDGQEIILIPAGRGGLGNEQFKTSTNQAPHYAQPGEPGIEAWVILELKVLADVGLVGFPNAGKSTLLSKVSAAKPEIADYAFTTLAPNLGVVKYRDYRSFIMADIPGIIEGAAEGKGLGIRFLRHIERNSILLFLIAADSKDIRAEYEILLNELQKYNPELLHKDRILAISKSDMLDDELKAELKKELPKGVETVFFSSYLNQGLTELKDLLWTTMNKPKSDFME.

Positions 4–162 (SNFIDYVKVC…AWVILELKVL (159 aa)) constitute an Obg domain. One can recognise an OBG-type G domain in the interval 163-329 (ADVGLVGFPN…LKDLLWTTMN (167 aa)). GTP-binding positions include 169–176 (GFPNAGKS), 194–198 (FTTLA), 216–219 (DIPG), 283–286 (SKSD), and 310–312 (SSY). The Mg(2+) site is built by Ser-176 and Thr-196.

It belongs to the TRAFAC class OBG-HflX-like GTPase superfamily. OBG GTPase family. In terms of assembly, monomer. It depends on Mg(2+) as a cofactor.

It localises to the cytoplasm. An essential GTPase which binds GTP, GDP and possibly (p)ppGpp with moderate affinity, with high nucleotide exchange rates and a fairly low GTP hydrolysis rate. Plays a role in control of the cell cycle, stress response, ribosome biogenesis and in those bacteria that undergo differentiation, in morphogenesis control. This Cytophaga hutchinsonii (strain ATCC 33406 / DSM 1761 / CIP 103989 / NBRC 15051 / NCIMB 9469 / D465) protein is GTPase Obg.